The chain runs to 1059 residues: Carbamoyl phosphate synthase large chain (1059 aa).

The tract at residues 1 to 401 (MPKRTDIKKI…SLLKACRSLE (401 aa)) is carboxyphosphate synthetic domain. Residues Arg-129, Arg-169, Gly-175, Gly-176, Arg-208, Ile-210, Glu-215, Gly-241, Ile-242, His-243, Gln-284, and Glu-298 each contribute to the ATP site. Positions 133–327 (KQLMEDLEQP…IAKLAAKIAV (195 aa)) constitute an ATP-grasp 1 domain. Mg(2+) is bound by residues Gln-284, Glu-298, and Asn-300. Mn(2+) is bound by residues Gln-284, Glu-298, and Asn-300. Residues 402–546 (IGVYHNEMPE…YSTYEWENES (145 aa)) form an oligomerization domain region. Residues 547–929 (IKSEKESVIV…ALYKAFEASY (383 aa)) are carbamoyl phosphate synthetic domain. The ATP-grasp 2 domain maps to 671–861 (EQALKDLNIP…MAQIATKLIL (191 aa)). Positions 707, 746, 748, 752, 777, 778, 779, 780, 820, and 832 each coordinate ATP. Mg(2+)-binding residues include Gln-820, Glu-832, and Asn-834. Positions 820, 832, and 834 each coordinate Mn(2+). Positions 930–1059 (FHLPAFGNVI…ESRGFITQAI (130 aa)) constitute an MGS-like domain. The tract at residues 930–1059 (FHLPAFGNVI…ESRGFITQAI (130 aa)) is allosteric domain.

The protein belongs to the CarB family. In terms of assembly, composed of two chains; the small (or glutamine) chain promotes the hydrolysis of glutamine to ammonia, which is used by the large (or ammonia) chain to synthesize carbamoyl phosphate. Tetramer of heterodimers (alpha,beta)4. Mg(2+) is required as a cofactor. Mn(2+) serves as cofactor.

The enzyme catalyses hydrogencarbonate + L-glutamine + 2 ATP + H2O = carbamoyl phosphate + L-glutamate + 2 ADP + phosphate + 2 H(+). It catalyses the reaction hydrogencarbonate + NH4(+) + 2 ATP = carbamoyl phosphate + 2 ADP + phosphate + 2 H(+). Its pathway is amino-acid biosynthesis; L-arginine biosynthesis; carbamoyl phosphate from bicarbonate: step 1/1. It participates in pyrimidine metabolism; UMP biosynthesis via de novo pathway; (S)-dihydroorotate from bicarbonate: step 1/3. Large subunit of the glutamine-dependent carbamoyl phosphate synthetase (CPSase). CPSase catalyzes the formation of carbamoyl phosphate from the ammonia moiety of glutamine, carbonate, and phosphate donated by ATP, constituting the first step of 2 biosynthetic pathways, one leading to arginine and/or urea and the other to pyrimidine nucleotides. The large subunit (synthetase) binds the substrates ammonia (free or transferred from glutamine from the small subunit), hydrogencarbonate and ATP and carries out an ATP-coupled ligase reaction, activating hydrogencarbonate by forming carboxy phosphate which reacts with ammonia to form carbamoyl phosphate. The polypeptide is Carbamoyl phosphate synthase large chain (Streptococcus mutans serotype c (strain ATCC 700610 / UA159)).